A 197-amino-acid polypeptide reads, in one-letter code: FMN-dependent NADH:quinone oxidoreductase 1 (197 aa).

FMN is bound by residues Ser-10, 16–18 (SQS), 93–96 (MYNF), and 137–140 (TRGG).

The protein belongs to the azoreductase type 1 family. Homodimer. FMN serves as cofactor.

The catalysed reaction is 2 a quinone + NADH + H(+) = 2 a 1,4-benzosemiquinone + NAD(+). It catalyses the reaction N,N-dimethyl-1,4-phenylenediamine + anthranilate + 2 NAD(+) = 2-(4-dimethylaminophenyl)diazenylbenzoate + 2 NADH + 2 H(+). Its function is as follows. Quinone reductase that provides resistance to thiol-specific stress caused by electrophilic quinones. Also exhibits azoreductase activity. Catalyzes the reductive cleavage of the azo bond in aromatic azo compounds to the corresponding amines. The sequence is that of FMN-dependent NADH:quinone oxidoreductase 1 from Photobacterium profundum (strain SS9).